The sequence spans 338 residues: Ketol-acid reductoisomerase (NADP(+)) (338 aa).

Positions 1–181 (MKVFYDKDCD…GGGKAGIIET (181 aa)) constitute a KARI N-terminal Rossmann domain. NADP(+) contacts are provided by residues 24–27 (YGSQ), Arg-47, and Ser-52. Residue His-107 is part of the active site. Gly-133 contacts NADP(+). Residues 182 to 327 (NFKEETETDL…AQLRAMMPWI (146 aa)) enclose the KARI C-terminal knotted domain. Mg(2+)-binding residues include Asp-190, Glu-194, Glu-226, and Glu-230. Position 251 (Ser-251) interacts with substrate.

This sequence belongs to the ketol-acid reductoisomerase family. Requires Mg(2+) as cofactor.

It carries out the reaction (2R)-2,3-dihydroxy-3-methylbutanoate + NADP(+) = (2S)-2-acetolactate + NADPH + H(+). It catalyses the reaction (2R,3R)-2,3-dihydroxy-3-methylpentanoate + NADP(+) = (S)-2-ethyl-2-hydroxy-3-oxobutanoate + NADPH + H(+). It participates in amino-acid biosynthesis; L-isoleucine biosynthesis; L-isoleucine from 2-oxobutanoate: step 2/4. Its pathway is amino-acid biosynthesis; L-valine biosynthesis; L-valine from pyruvate: step 2/4. Its function is as follows. Involved in the biosynthesis of branched-chain amino acids (BCAA). Catalyzes an alkyl-migration followed by a ketol-acid reduction of (S)-2-acetolactate (S2AL) to yield (R)-2,3-dihydroxy-isovalerate. In the isomerase reaction, S2AL is rearranged via a Mg-dependent methyl migration to produce 3-hydroxy-3-methyl-2-ketobutyrate (HMKB). In the reductase reaction, this 2-ketoacid undergoes a metal-dependent reduction by NADPH to yield (R)-2,3-dihydroxy-isovalerate. The chain is Ketol-acid reductoisomerase (NADP(+)) from Acidovorax ebreus (strain TPSY) (Diaphorobacter sp. (strain TPSY)).